Here is a 288-residue protein sequence, read N- to C-terminus: 4-hydroxy-3-methylbut-2-enyl diphosphate reductase (288 aa).

Cys12 contributes to the [4Fe-4S] cluster binding site. His42 and His77 together coordinate (2E)-4-hydroxy-3-methylbut-2-enyl diphosphate. His42 and His77 together coordinate dimethylallyl diphosphate. Residues His42 and His77 each contribute to the isopentenyl diphosphate site. [4Fe-4S] cluster is bound at residue Cys99. Residue His127 coordinates (2E)-4-hydroxy-3-methylbut-2-enyl diphosphate. His127 contacts dimethylallyl diphosphate. His127 lines the isopentenyl diphosphate pocket. Glu129 (proton donor) is an active-site residue. (2E)-4-hydroxy-3-methylbut-2-enyl diphosphate is bound at residue Thr165. Cys193 provides a ligand contact to [4Fe-4S] cluster. Ser221, Ser222, Asn223, and Ser265 together coordinate (2E)-4-hydroxy-3-methylbut-2-enyl diphosphate. Dimethylallyl diphosphate is bound by residues Ser221, Ser222, Asn223, and Ser265. Isopentenyl diphosphate is bound by residues Ser221, Ser222, Asn223, and Ser265.

It belongs to the IspH family. The cofactor is [4Fe-4S] cluster.

The catalysed reaction is isopentenyl diphosphate + 2 oxidized [2Fe-2S]-[ferredoxin] + H2O = (2E)-4-hydroxy-3-methylbut-2-enyl diphosphate + 2 reduced [2Fe-2S]-[ferredoxin] + 2 H(+). It catalyses the reaction dimethylallyl diphosphate + 2 oxidized [2Fe-2S]-[ferredoxin] + H2O = (2E)-4-hydroxy-3-methylbut-2-enyl diphosphate + 2 reduced [2Fe-2S]-[ferredoxin] + 2 H(+). It participates in isoprenoid biosynthesis; dimethylallyl diphosphate biosynthesis; dimethylallyl diphosphate from (2E)-4-hydroxy-3-methylbutenyl diphosphate: step 1/1. It functions in the pathway isoprenoid biosynthesis; isopentenyl diphosphate biosynthesis via DXP pathway; isopentenyl diphosphate from 1-deoxy-D-xylulose 5-phosphate: step 6/6. In terms of biological role, catalyzes the conversion of 1-hydroxy-2-methyl-2-(E)-butenyl 4-diphosphate (HMBPP) into a mixture of isopentenyl diphosphate (IPP) and dimethylallyl diphosphate (DMAPP). Acts in the terminal step of the DOXP/MEP pathway for isoprenoid precursor biosynthesis. In Caldanaerobacter subterraneus subsp. tengcongensis (strain DSM 15242 / JCM 11007 / NBRC 100824 / MB4) (Thermoanaerobacter tengcongensis), this protein is 4-hydroxy-3-methylbut-2-enyl diphosphate reductase.